Here is a 528-residue protein sequence, read N- to C-terminus: MNSYKEEILQTKSDFTLKNLIFFAISTLCYKRALFNENCYKKVNFEIEHFKGADFDCQLKPTVVSLQAGVDKEADSFLEMMKTYIFSLVSMKVPFTVYLIISSQCKSILEDDAVEKEIFSFTINPGSEEKICCESFVSYQRSERFVIKLFLSGNVKTECKDEEKVVQIITKMERFQLSKGEATKAGVFLNTVETKDCMSWLNRGEFKDIVSFYESNNGIAISHCSHAFVPISTEKIMINKESSLFDSQEKIDSQLEKFLQPLKYDEIGSTQILDEQSVEKSLSQGKCEKMQNESRGLREIKNNNPCEEVKKSNWLKKNISGSDKVDKAEKKKALLNCECGDSTEDSEMFQCERCDGWVHCACYGFESDSDPRQPNQLLCYTCLLVDSESSLYDRMTMLVAYRRAIRCIWASEYQGFQKLAARLNCSYADAKRIEERLVNENIIYKEKKRKWIYFTNKSPEMVSYLREKYFTPSRWISHLNFQNYRQENQRVNMRSFLRPERMEVIERPKKVSKTSNTKETDTMKPLRI.

The region spanning 11 to 212 (TKSDFTLKNL…RGEFKDIVSF (202 aa)) is the HORMA domain. A PHD-type zinc finger spans residues 334–385 (LLNCECGDSTEDSEMFQCERCDGWVHCACYGFESDSDPRQPNQLLCYTCLLV). Cys337, Cys339, Cys351, Cys354, His359, Cys362, Cys379, and Cys382 together coordinate Zn(2+). The segment at 507–528 (RPKKVSKTSNTKETDTMKPLRI) is disordered. Residues 516 to 528 (NTKETDTMKPLRI) are compositionally biased toward basic and acidic residues.

Interacts (via N-terminus) with rec10; the interaction is direct. Interacts (via C-terminus) with rec15 (via C-terminus); the interaction is direct.

The protein resides in the nucleus. It is found in the chromosome. Its function is as follows. Facilitates initiation of meiotic recombination and DNA double-strand break (DSB) formation at DSB hotspot sites by enhancing the interaction between rec10 and rec15. This Schizosaccharomyces pombe (strain 972 / ATCC 24843) (Fission yeast) protein is Linear element-associated protein hop1.